Here is an 86-residue protein sequence, read N- to C-terminus: MEKLTILILVATVLLAIQVLVQSDGENPVKGRVKHYAAKRFSALFRGPRECTTKHRRCEKDEECCPNLECKCLTSPDCQSGYKCKP.

A signal peptide spans methionine 1–serine 23. The propeptide occupies aspartate 24 to arginine 49.

The protein belongs to the conotoxin O2 superfamily. Post-translationally, contains 4 disulfide bonds. Expressed by the venom duct.

Its subcellular location is the secreted. In Conus litteratus (Lettered cone), this protein is Conotoxin Lt15a.